We begin with the raw amino-acid sequence, 21 residues long: Cyanophlyctin (21 aa).

In terms of tissue distribution, expressed by the skin glands.

The protein resides in the secreted. Functionally, has antibacterial activity against E.coli HP101BA (MIC=6.4 uM), K.pneumoniae PTCC1388 (MIC=7.3 uM), M.luteus PTCC1625 (MIC=4.7 uM) and S.aureus PTCC1431 (MIC=5.3 uM). Has no or very limited (&lt;3%) hemolytic activity at concentrations of 15 ug/ml and 60 ug/ml, respectively. The protein is Cyanophlyctin of Euphlyctis cyanophlyctis (Skittering frog).